The primary structure comprises 176 residues: Peptidoglycan-associated lipoprotein (176 aa).

The first 32 residues, 1-32 (MSRIDTPAASRMQTIARNPVMIALVMTLALAG), serve as a signal peptide directing secretion. Cys-33 carries N-palmitoyl cysteine lipidation. The S-diacylglycerol cysteine moiety is linked to residue Cys-33. Residues 58 to 175 (QQDFTVNVGD…RAVTVLGGAG (118 aa)) enclose the OmpA-like domain.

It belongs to the Pal lipoprotein family. As to quaternary structure, the Tol-Pal system is composed of five core proteins: the inner membrane proteins TolA, TolQ and TolR, the periplasmic protein TolB and the outer membrane protein Pal. They form a network linking the inner and outer membranes and the peptidoglycan layer.

Its subcellular location is the cell outer membrane. Part of the Tol-Pal system, which plays a role in outer membrane invagination during cell division and is important for maintaining outer membrane integrity. The sequence is that of Peptidoglycan-associated lipoprotein from Rhizobium meliloti (strain 1021) (Ensifer meliloti).